We begin with the raw amino-acid sequence, 420 residues long: F420-non-reducing hydrogenase vhu subunit A (420 aa).

The Ni(2+) site is built by Cys61 and Cys64.

It belongs to the [NiFe]/[NiFeSe] hydrogenase large subunit family. In terms of assembly, the F420-non-reducing hydrogenase vhu is composed of four subunits; VhuA, VhuD, VhuG and VhuU. Requires Ni(2+) as cofactor.

In Methanococcus voltae, this protein is F420-non-reducing hydrogenase vhu subunit A (vhuA).